The sequence spans 257 residues: MNPLIIKLGGVLLDSEEALERLFTALVNYRESHQRPLVIVHGGGCVVDELMKGLNLPVKKKDGLRVTPADQIGIITGALAGTANKTLLAWAKKHHIASVGLFLGDGDSVKVTQLDEALGHVGLAQPGSPKLINMLLENGFLPVVSSIGVTDDGQLMNVNADQAATALAATLGADLILLSDVSGILDGKGQRIAEMTASKAEQLIDQGIITDGMIVKVNAALDAARALGRPVDIASWRHAEQLPALFNGTPIGTRILA.

Substrate contacts are provided by residues 43–44 (GG), Arg65, and Asn157. ATP is bound by residues 180 to 185 (DVSGIL) and 208 to 210 (IIT).

The protein belongs to the acetylglutamate kinase family. ArgB subfamily. Homodimer.

The protein localises to the cytoplasm. The catalysed reaction is N-acetyl-L-glutamate + ATP = N-acetyl-L-glutamyl 5-phosphate + ADP. It participates in amino-acid biosynthesis; L-arginine biosynthesis; N(2)-acetyl-L-ornithine from L-glutamate: step 2/4. Catalyzes the ATP-dependent phosphorylation of N-acetyl-L-glutamate. The polypeptide is Acetylglutamate kinase (Salmonella schwarzengrund (strain CVM19633)).